Consider the following 503-residue polypeptide: Ribose import ATP-binding protein RbsA 1 (503 aa).

ABC transporter domains are found at residues 5 to 241 and 253 to 495; these read IALE…VGRA and IGQP…AGIE. ATP is bound at residue 37-44; it reads GENGAGKS.

Belongs to the ABC transporter superfamily. Ribose importer (TC 3.A.1.2.1) family. As to quaternary structure, the complex is composed of an ATP-binding protein (RbsA), two transmembrane proteins (RbsC) and a solute-binding protein (RbsB).

Its subcellular location is the cell inner membrane. The catalysed reaction is D-ribose(out) + ATP + H2O = D-ribose(in) + ADP + phosphate + H(+). Part of the ABC transporter complex RbsABC involved in ribose import. Responsible for energy coupling to the transport system. This chain is Ribose import ATP-binding protein RbsA 1, found in Rhizobium meliloti (strain 1021) (Ensifer meliloti).